The primary structure comprises 271 residues: Putative hydro-lyase OCAR_7359/OCA5_c07590 (271 aa).

It belongs to the D-glutamate cyclase family.

This chain is Putative hydro-lyase OCAR_7359/OCA5_c07590, found in Afipia carboxidovorans (strain ATCC 49405 / DSM 1227 / KCTC 32145 / OM5) (Oligotropha carboxidovorans).